Here is a 207-residue protein sequence, read N- to C-terminus: 8-oxoguanine DNA glycosylase/AP lyase (207 aa).

Active-site residues include lysine 128 and aspartate 146.

Belongs to the type-2 OGG1 family.

It carries out the reaction 2'-deoxyribonucleotide-(2'-deoxyribose 5'-phosphate)-2'-deoxyribonucleotide-DNA = a 3'-end 2'-deoxyribonucleotide-(2,3-dehydro-2,3-deoxyribose 5'-phosphate)-DNA + a 5'-end 5'-phospho-2'-deoxyribonucleoside-DNA + H(+). Functionally, catalyzes the excision of an oxidatively damaged form of guanine (7,8-dihydro-8-oxoguanine = 8-oxoG) from DNA. Also cleaves the DNA backbone at apurinic/apyrimidinic sites (AP sites). This chain is 8-oxoguanine DNA glycosylase/AP lyase, found in Saccharolobus islandicus (strain Y.N.15.51 / Yellowstone #2) (Sulfolobus islandicus).